A 1117-amino-acid polypeptide reads, in one-letter code: Endogenous retrovirus group K member 9 Pol protein (1117 aa).

The N-myristoyl glycine moiety is linked to residue Gly2. The Reverse transcriptase domain occupies 58-195; the sequence is KDWKRIGKEL…AGQVPVTLQP (138 aa). Positions 165 to 264 are disordered; that stretch reads GKGPELVGPS…APPSRQGSEL (100 aa). Over residues 232–247 the composition is skewed to pro residues; the sequence is GMPPAPQGRAPYPQPP. CCHC-type zinc fingers lie at residues 544 to 561 and 580 to 597; these read GKCY…NCPV and DLCP…QCRS. Residues 598–629 are disordered; it reads KFDKNGQPLSGNEQRGQPQAPQQTGAFPIQPF. A compositionally biased stretch (polar residues) spans 604–622; the sequence is QPLSGNEQRGQPQAPQQTG. The Peptidase A2 domain maps to 800–875; it reads FEGLVDTGAD…IPLNLWGRDL (76 aa). Asp805 is a catalytic residue. The region spanning 890-936 is the G-patch domain; that stretch reads YSPTSQKIMTKRGYIPGKGLGKNEDGIKIPFEAKINQKREGIGYPFL.

It belongs to the beta type-B retroviral polymerase family. HERV class-II K(HML-2) pol subfamily. Post-translationally, myristoylation is essential for retroviral assembly. Alteration of the glycine residue leads to a block in the budding of particles and an accumulation of Gag inside the cell. In terms of processing, specific enzymatic cleavages may yield mature proteins.

The protein localises to the cell membrane. The catalysed reaction is Processing at the authentic HIV-1 PR recognition site and release of the mature p17 matrix and the p24 capsid protein, as a result of the cleavage of the -SQNY-|-PIVQ- cleavage site.. It catalyses the reaction DNA(n) + a 2'-deoxyribonucleoside 5'-triphosphate = DNA(n+1) + diphosphate. The enzyme catalyses Endonucleolytic cleavage to 5'-phosphomonoester.. In terms of biological role, the products of the Gag polyproteins of infectious retroviruses perform highly complex orchestrated tasks during the assembly, budding, maturation, and infection stages of the viral replication cycle. During viral assembly, the proteins form membrane associations and self-associations that ultimately result in budding of an immature virion from the infected cell. Gag precursors also function during viral assembly to selectively bind and package two plus strands of genomic RNA. Endogenous Gag proteins may have kept, lost or modified their original function during evolution. Its function is as follows. Early post-infection, the reverse transcriptase converts the viral RNA genome into double-stranded viral DNA. The RNase H domain of the reverse transcriptase performs two functions. It degrades the RNA template and specifically removes the RNA primer from the RNA/DNA hybrid. Following nuclear import, the integrase catalyzes the insertion of the linear, double-stranded viral DNA into the host cell chromosome. Endogenous Pol proteins may have kept, lost or modified their original function during evolution. The chain is Endogenous retrovirus group K member 9 Pol protein (ERVK-9) from Homo sapiens (Human).